We begin with the raw amino-acid sequence, 299 residues long: Recombination-associated protein RdgC (299 aa).

The protein belongs to the RdgC family.

The protein localises to the cytoplasm. The protein resides in the nucleoid. In terms of biological role, may be involved in recombination. This chain is Recombination-associated protein RdgC, found in Cupriavidus necator (strain ATCC 17699 / DSM 428 / KCTC 22496 / NCIMB 10442 / H16 / Stanier 337) (Ralstonia eutropha).